Here is a 308-residue protein sequence, read N- to C-terminus: Very-long-chain enoyl-CoA reductase (308 aa).

Residues 1–86 lie on the Cytoplasmic side of the membrane; it reads MKHYEVEIRD…YFRDLGAQIS (86 aa). Lys22 bears the N6-acetyllysine mark. At Ser58 the chain carries Phosphoserine. Lys60 bears the N6-acetyllysine mark. A helical membrane pass occupies residues 87–106; it reads WVTVFLTEYAGPLFIYLLFY. Over 107–124 the chain is Lumenal; the sequence is FRVPFIYGRKYDFTSSRH. The chain crosses the membrane as a helical span at residues 125-147; that stretch reads TVVHLACMCHSFHYIKRLLETLF. The Cytoplasmic portion of the chain corresponds to 148–158; it reads VHRFSHGTMPL. The helical transmembrane segment at 159 to 180 threads the bilayer; the sequence is RNIFKNCTYYWGFAAWMAYYIN. Topologically, residues 181 to 189 are lumenal; the sequence is HPLYTPPTY. The chain crosses the membrane as a helical span at residues 190 to 216; it reads GVQQVKLALAIFVICQLGNFSIHMALR. Over 217–245 the chain is Cytoplasmic; the sequence is DLRPAGSKTRKIPYPTKNPFTWLFLLVSC. The helical transmembrane segment at 246-262 threads the bilayer; it reads PNYTYEVGSWIGFAIMT. At 263-264 the chain is on the lumenal side; it reads QC. The chain crosses the membrane as a helical span at residues 265–292; sequence VPVALFSLVGFTQMTIWAKGKHRSYLKE. Residues 293–308 lie on the Cytoplasmic side of the membrane; sequence FRDYPPLRMPIIPFLL.

This sequence belongs to the steroid 5-alpha reductase family. In terms of assembly, interacts with ELOVL1 and LASS2. Glycosylated. Expressed at high levels in brain and is also found at lower levels in several other tissues.

It localises to the endoplasmic reticulum membrane. It carries out the reaction a very-long-chain 2,3-saturated fatty acyl-CoA + NADP(+) = a very-long-chain (2E)-enoyl-CoA + NADPH + H(+). The catalysed reaction is octadecanoyl-CoA + NADP(+) = (2E)-octadecenoyl-CoA + NADPH + H(+). It catalyses the reaction (2E,7Z,10Z,13Z,16Z)-docosapentaenoyl-CoA + NADPH + H(+) = (7Z,10Z,13Z,16Z)-docosatetraenoyl-CoA + NADP(+). The enzyme catalyses (2E,7Z,10Z,13Z,16Z,19Z)-docosahexaenoyl-CoA + NADPH + H(+) = (7Z,10Z,13Z,16Z,19Z)-docosapentaenoyl-CoA + NADP(+). It carries out the reaction (2E,8Z,11Z,14Z)-eicosatetraenoyl-CoA + NADPH + H(+) = (8Z,11Z,14Z)-eicosatrienoyl-CoA + NADP(+). The catalysed reaction is (2E)-hexadecenoyl-CoA + NADPH + H(+) = hexadecanoyl-CoA + NADP(+). Its pathway is lipid metabolism; fatty acid biosynthesis. It functions in the pathway lipid metabolism; sphingolipid metabolism. In terms of biological role, involved in both the production of very long-chain fatty acids for sphingolipid synthesis and the degradation of the sphingosine moiety in sphingolipids through the sphingosine 1-phosphate metabolic pathway. Catalyzes the last of the four reactions of the long-chain fatty acids elongation cycle. This endoplasmic reticulum-bound enzymatic process, allows the addition of 2 carbons to the chain of long- and very long-chain fatty acids/VLCFAs per cycle. This enzyme reduces the trans-2,3-enoyl-CoA fatty acid intermediate to an acyl-CoA that can be further elongated by entering a new cycle of elongation. Thereby, it participates in the production of VLCFAs of different chain lengths that are involved in multiple biological processes as precursors of membrane lipids and lipid mediators. Catalyzes the saturation step of the sphingosine 1-phosphate metabolic pathway, the conversion of trans-2-hexadecenoyl-CoA to palmitoyl-CoA. This Rattus norvegicus (Rat) protein is Very-long-chain enoyl-CoA reductase (Tecr).